Consider the following 303-residue polypeptide: Cathepsin B-like CP1 (303 aa).

The N-terminal stretch at 1–19 (MALSLLLAVVCAKPLVSRA) is a signal peptide. Asn41 is a glycosylation site (N-linked (GlcNAc...) asparagine). 3 disulfides stabilise this stretch: Cys92/Cys119, Cys102/Cys145, and Cys138/Cys181. Cys105 is an active-site residue. Active-site residues include His249 and Asn270.

The protein belongs to the peptidase C1 family.

It localises to the vacuole. Functionally, thiol protease which is required for parasite excystation and invasion of the proximal small intestine of the human host. The sequence is that of Cathepsin B-like CP1 (CP1) from Giardia intestinalis (Giardia lamblia).